A 482-amino-acid chain; its full sequence is Alanine aminotransferase 2 (482 aa).

N6-(pyridoxal phosphate)lysine is present on K299.

This sequence belongs to the class-I pyridoxal-phosphate-dependent aminotransferase family. Alanine aminotransferase subfamily. Homodimer. Pyridoxal 5'-phosphate is required as a cofactor. Post-translationally, the N-terminus is blocked. As to expression, mesophyll and bundle sheath cells.

The catalysed reaction is L-alanine + 2-oxoglutarate = pyruvate + L-glutamate. It functions in the pathway photosynthesis; C4 acid pathway. The protein operates within amino-acid degradation; L-alanine degradation via transaminase pathway; pyruvate from L-alanine: step 1/1. Its function is as follows. Transfer of C3 units between the cytosol of mesophyll and bundle sheath cells to maintain a nitrogen-carbon balance in the C4-dicarboxylic pathway. This chain is Alanine aminotransferase 2, found in Panicum miliaceum (Proso millet).